The sequence spans 348 residues: MAIILAIETSCDETAVAIVNNRNVCSNVVSSQIQTHQIFGGVVPEVASRQHLLLINTCLDQALQASGLGWPEIEAIAVTVAPGLAGALMVGVTAAKTLAMVHQKPFLGVHHLEGHIYASYLSQPDLQPPFLCLLVSGGHTSLIHVKGCGDYRQLGTTRDDAAGEAFDKVARLLDLGYPGGPAIDRAAKQGDPGTFKLPEGKISLPQGGYHPYDSSFSGLKTAMLRLTQELKQSSAPLPVDDLAASFQDTVARSLTKKTIQCVLDHGLTTITVGGGVAANSRLRYHLQTAAQEHQLQVFFPPLKFCTDNAAMIACAAADHFQNGDRSPLTLGVQSRLSVEQVSQLYERN.

Fe cation-binding residues include H111 and H115. Substrate is bound by residues 134–138 (LVSGG), D167, G180, D184, and N279. D307 contributes to the Fe cation binding site.

The protein belongs to the KAE1 / TsaD family. Fe(2+) serves as cofactor.

The protein resides in the cytoplasm. It catalyses the reaction L-threonylcarbamoyladenylate + adenosine(37) in tRNA = N(6)-L-threonylcarbamoyladenosine(37) in tRNA + AMP + H(+). Its function is as follows. Required for the formation of a threonylcarbamoyl group on adenosine at position 37 (t(6)A37) in tRNAs that read codons beginning with adenine. Is involved in the transfer of the threonylcarbamoyl moiety of threonylcarbamoyl-AMP (TC-AMP) to the N6 group of A37, together with TsaE and TsaB. TsaD likely plays a direct catalytic role in this reaction. The protein is tRNA N6-adenosine threonylcarbamoyltransferase of Synechocystis sp. (strain ATCC 27184 / PCC 6803 / Kazusa).